Here is a 405-residue protein sequence, read N- to C-terminus: Probable tRNA sulfurtransferase (405 aa).

The THUMP domain occupies 60-165 (TEVDKRLKKV…QDAVYISNQL (106 aa)). Residues 183–184 (ML), 208–209 (HF), R265, G287, and Q296 each bind ATP.

This sequence belongs to the ThiI family.

It localises to the cytoplasm. The catalysed reaction is [ThiI sulfur-carrier protein]-S-sulfanyl-L-cysteine + a uridine in tRNA + 2 reduced [2Fe-2S]-[ferredoxin] + ATP + H(+) = [ThiI sulfur-carrier protein]-L-cysteine + a 4-thiouridine in tRNA + 2 oxidized [2Fe-2S]-[ferredoxin] + AMP + diphosphate. It catalyses the reaction [ThiS sulfur-carrier protein]-C-terminal Gly-Gly-AMP + S-sulfanyl-L-cysteinyl-[cysteine desulfurase] + AH2 = [ThiS sulfur-carrier protein]-C-terminal-Gly-aminoethanethioate + L-cysteinyl-[cysteine desulfurase] + A + AMP + 2 H(+). The protein operates within cofactor biosynthesis; thiamine diphosphate biosynthesis. Its function is as follows. Catalyzes the ATP-dependent transfer of a sulfur to tRNA to produce 4-thiouridine in position 8 of tRNAs, which functions as a near-UV photosensor. Also catalyzes the transfer of sulfur to the sulfur carrier protein ThiS, forming ThiS-thiocarboxylate. This is a step in the synthesis of thiazole, in the thiamine biosynthesis pathway. The sulfur is donated as persulfide by IscS. The protein is Probable tRNA sulfurtransferase of Lactobacillus acidophilus (strain ATCC 700396 / NCK56 / N2 / NCFM).